The following is a 277-amino-acid chain: MKQLYGVIGNPIGHSLSPVMHNDAFEHLNMDAHYHAFLVKEEVLGEAVRGLKALGISGFNVTTPHKVAIMDYLDEIDPLAKQIGAVNTVVHKDGKLIGYNTDGIGFVRALQSISNEPLQEKRILLLGAGGASRAIYFSLADVGVKEIDVANRTVDKAKELIAACTATVHSVALSLEKATKEQGNYDIIIQTTTIGMHPRVEHTPLQISSLKKGTIVSDIIYNPFETKILCEAKEQGAIIQNGIDMFVYQGALAFEMWTGCVPNIERMKQLVIRKLGG.

Shikimate is bound by residues 15 to 17 (SLS) and Thr-62. The Proton acceptor role is filled by Lys-66. Shikimate contacts are provided by Asn-87 and Asp-102. NADP(+) is bound by residues 127-131 (GAGGA), 151-156 (NRTVDK), and Ile-219. A shikimate-binding site is contributed by Tyr-221. Residue Gly-242 coordinates NADP(+).

This sequence belongs to the shikimate dehydrogenase family. Homodimer.

The catalysed reaction is shikimate + NADP(+) = 3-dehydroshikimate + NADPH + H(+). It functions in the pathway metabolic intermediate biosynthesis; chorismate biosynthesis; chorismate from D-erythrose 4-phosphate and phosphoenolpyruvate: step 4/7. Functionally, involved in the biosynthesis of the chorismate, which leads to the biosynthesis of aromatic amino acids. Catalyzes the reversible NADPH linked reduction of 3-dehydroshikimate (DHSA) to yield shikimate (SA). The sequence is that of Shikimate dehydrogenase (NADP(+)) from Bacillus cereus (strain ZK / E33L).